The primary structure comprises 345 residues: Very-long-chain 3-oxoacyl-CoA reductase (345 aa).

The helical transmembrane segment at 26 to 46 threads the bilayer; it reads GAAVLLTTGTLFIASRVLTFV. The NADP(+) site is built by V71, D125, D133, N152, Y219, K223, I252, and S254. Y219 functions as the Proton donor in the catalytic mechanism. The active-site Lowers pKa of active site Tyr is K223.

This sequence belongs to the short-chain dehydrogenases/reductases (SDR) family.

The protein resides in the endoplasmic reticulum membrane. The catalysed reaction is a very-long-chain (3R)-3-hydroxyacyl-CoA + NADP(+) = a very-long-chain 3-oxoacyl-CoA + NADPH + H(+). It participates in lipid metabolism; fatty acid biosynthesis. In terms of biological role, component of the microsomal membrane bound fatty acid elongation system, which produces the 26-carbon very long-chain fatty acids (VLCFA) from palmitate. Catalyzes the reduction of the 3-ketoacyl-CoA intermediate that is formed in each cycle of fatty acid elongation. VLCFAs serve as precursors for ceramide and sphingolipids. The chain is Very-long-chain 3-oxoacyl-CoA reductase from Aspergillus fumigatus (strain CBS 144.89 / FGSC A1163 / CEA10) (Neosartorya fumigata).